The primary structure comprises 347 residues: Phenylalanine--tRNA ligase alpha subunit (347 aa).

Glu261 contacts Mg(2+).

Belongs to the class-II aminoacyl-tRNA synthetase family. Phe-tRNA synthetase alpha subunit type 1 subfamily. As to quaternary structure, tetramer of two alpha and two beta subunits. Mg(2+) is required as a cofactor.

It localises to the cytoplasm. The enzyme catalyses tRNA(Phe) + L-phenylalanine + ATP = L-phenylalanyl-tRNA(Phe) + AMP + diphosphate + H(+). This chain is Phenylalanine--tRNA ligase alpha subunit, found in Streptococcus pyogenes serotype M18 (strain MGAS8232).